We begin with the raw amino-acid sequence, 417 residues long: Sulfate adenylyltransferase (417 aa).

It belongs to the sulfate adenylyltransferase family.

The catalysed reaction is sulfate + ATP + H(+) = adenosine 5'-phosphosulfate + diphosphate. It participates in sulfur metabolism; hydrogen sulfide biosynthesis; sulfite from sulfate: step 1/3. The sequence is that of Sulfate adenylyltransferase from Psychrobacter cryohalolentis (strain ATCC BAA-1226 / DSM 17306 / VKM B-2378 / K5).